The following is a 370-amino-acid chain: 3-dehydroquinate synthase (370 aa).

Residues 108–112 (GVIGD), 132–133 (TT), Lys145, and Lys154 contribute to the NAD(+) site. Glu187, His249, and His267 together coordinate Zn(2+).

Belongs to the sugar phosphate cyclases superfamily. Dehydroquinate synthase family. Co(2+) is required as a cofactor. It depends on Zn(2+) as a cofactor. NAD(+) serves as cofactor.

Its subcellular location is the cytoplasm. The enzyme catalyses 7-phospho-2-dehydro-3-deoxy-D-arabino-heptonate = 3-dehydroquinate + phosphate. The protein operates within metabolic intermediate biosynthesis; chorismate biosynthesis; chorismate from D-erythrose 4-phosphate and phosphoenolpyruvate: step 2/7. Its function is as follows. Catalyzes the conversion of 3-deoxy-D-arabino-heptulosonate 7-phosphate (DAHP) to dehydroquinate (DHQ). This chain is 3-dehydroquinate synthase, found in Cereibacter sphaeroides (strain ATCC 17025 / ATH 2.4.3) (Rhodobacter sphaeroides).